A 156-amino-acid chain; its full sequence is Arginine repressor (156 aa).

It belongs to the ArgR family.

It localises to the cytoplasm. It functions in the pathway amino-acid biosynthesis; L-arginine biosynthesis [regulation]. Its function is as follows. Regulates arginine biosynthesis genes. This is Arginine repressor from Shewanella baltica (strain OS223).